A 164-amino-acid polypeptide reads, in one-letter code: Lipoprotein signal peptidase (164 aa).

2 helical membrane passes run 68 to 88 and 96 to 116; these read TILVVLAGAAVIFIAAMLWNA and FWGLSLILGGAAGNVFDRAMF. Active-site residues include aspartate 121 and aspartate 139. The helical transmembrane segment at 134–154 threads the bilayer; that stretch reads TFNVADSAIVVGSCLLLIDLL.

Belongs to the peptidase A8 family.

The protein resides in the cell inner membrane. It carries out the reaction Release of signal peptides from bacterial membrane prolipoproteins. Hydrolyzes -Xaa-Yaa-Zaa-|-(S,diacylglyceryl)Cys-, in which Xaa is hydrophobic (preferably Leu), and Yaa (Ala or Ser) and Zaa (Gly or Ala) have small, neutral side chains.. It functions in the pathway protein modification; lipoprotein biosynthesis (signal peptide cleavage). Functionally, this protein specifically catalyzes the removal of signal peptides from prolipoproteins. This chain is Lipoprotein signal peptidase, found in Solibacter usitatus (strain Ellin6076).